The following is a 739-amino-acid chain: Phosphoribosylformylglycinamidine synthase subunit PurL (739 aa).

H53 is a catalytic residue. ATP contacts are provided by Y56 and K95. A Mg(2+)-binding site is contributed by E97. Residues 98-101 (SHNH) and R120 each bind substrate. H99 functions as the Proton acceptor in the catalytic mechanism. D121 contacts Mg(2+). Substrate is bound at residue Q244. D274 provides a ligand contact to Mg(2+). 318-320 (ESQ) provides a ligand contact to substrate. D501 and G538 together coordinate ATP. Mg(2+) is bound at residue N539. S541 serves as a coordination point for substrate.

The protein belongs to the FGAMS family. In terms of assembly, monomer. Part of the FGAM synthase complex composed of 1 PurL, 1 PurQ and 2 PurS subunits.

The protein resides in the cytoplasm. It carries out the reaction N(2)-formyl-N(1)-(5-phospho-beta-D-ribosyl)glycinamide + L-glutamine + ATP + H2O = 2-formamido-N(1)-(5-O-phospho-beta-D-ribosyl)acetamidine + L-glutamate + ADP + phosphate + H(+). The protein operates within purine metabolism; IMP biosynthesis via de novo pathway; 5-amino-1-(5-phospho-D-ribosyl)imidazole from N(2)-formyl-N(1)-(5-phospho-D-ribosyl)glycinamide: step 1/2. In terms of biological role, part of the phosphoribosylformylglycinamidine synthase complex involved in the purines biosynthetic pathway. Catalyzes the ATP-dependent conversion of formylglycinamide ribonucleotide (FGAR) and glutamine to yield formylglycinamidine ribonucleotide (FGAM) and glutamate. The FGAM synthase complex is composed of three subunits. PurQ produces an ammonia molecule by converting glutamine to glutamate. PurL transfers the ammonia molecule to FGAR to form FGAM in an ATP-dependent manner. PurS interacts with PurQ and PurL and is thought to assist in the transfer of the ammonia molecule from PurQ to PurL. The protein is Phosphoribosylformylglycinamidine synthase subunit PurL of Listeria welshimeri serovar 6b (strain ATCC 35897 / DSM 20650 / CCUG 15529 / CIP 8149 / NCTC 11857 / SLCC 5334 / V8).